The sequence spans 388 residues: Chaperone protein DnaJ (388 aa).

The region spanning 5–69 is the J domain; sequence DYYDVLGVDK…QKKAQYDQFG (65 aa). The CR-type zinc finger occupies 145–227; sequence GKKTDITYTR…CHGKGTIDKK (83 aa). Zn(2+) is bound by residues Cys-158, Cys-161, Cys-175, Cys-178, Cys-201, Cys-204, Cys-215, and Cys-218. CXXCXGXG motif repeat units follow at residues 158-165, 175-182, 201-208, and 215-222; these read CPTCDGSG, CDKCHGTG, CDKCGGRG, and CQTCHGKG.

This sequence belongs to the DnaJ family. In terms of assembly, homodimer. It depends on Zn(2+) as a cofactor.

It localises to the cytoplasm. In terms of biological role, participates actively in the response to hyperosmotic and heat shock by preventing the aggregation of stress-denatured proteins and by disaggregating proteins, also in an autonomous, DnaK-independent fashion. Unfolded proteins bind initially to DnaJ; upon interaction with the DnaJ-bound protein, DnaK hydrolyzes its bound ATP, resulting in the formation of a stable complex. GrpE releases ADP from DnaK; ATP binding to DnaK triggers the release of the substrate protein, thus completing the reaction cycle. Several rounds of ATP-dependent interactions between DnaJ, DnaK and GrpE are required for fully efficient folding. Also involved, together with DnaK and GrpE, in the DNA replication of plasmids through activation of initiation proteins. The chain is Chaperone protein DnaJ from Lactobacillus gasseri (strain ATCC 33323 / DSM 20243 / BCRC 14619 / CIP 102991 / JCM 1131 / KCTC 3163 / NCIMB 11718 / NCTC 13722 / AM63).